Here is a 246-residue protein sequence, read N- to C-terminus: MPRPIGNLETTTDSGTGSAAFLFQPAHLVPFVQAWTWQRLWQERLLKGADSGGDPPPEAVWLLQHPPCYTLGRGASEDHLLFDPEHPPAPLHRIDRGGEVTHHAPGQLVIYPVLDLHRHRTDLHWYLRQLEQVVIDVLAALGLRGERIEGLTGVWLDQCKVAAIGVGCRRWITQHGVALNVNCALEGFESVVPCGLAGRAVGCLSDWCPGLHVSEVQPLVCDALAARFGLCLEPNADAAIAEGRCW.

The BPL/LPL catalytic domain occupies 54-240; sequence DPPPEAVWLL…CLEPNADAAI (187 aa). Residues 96–103, 163–165, and 176–178 contribute to the substrate site; these read RGGEVTHH, AIG, and GVA. The active-site Acyl-thioester intermediate is the cysteine 194.

The protein belongs to the LipB family.

It localises to the cytoplasm. It catalyses the reaction octanoyl-[ACP] + L-lysyl-[protein] = N(6)-octanoyl-L-lysyl-[protein] + holo-[ACP] + H(+). It functions in the pathway protein modification; protein lipoylation via endogenous pathway; protein N(6)-(lipoyl)lysine from octanoyl-[acyl-carrier-protein]: step 1/2. In terms of biological role, catalyzes the transfer of endogenously produced octanoic acid from octanoyl-acyl-carrier-protein onto the lipoyl domains of lipoate-dependent enzymes. Lipoyl-ACP can also act as a substrate although octanoyl-ACP is likely to be the physiological substrate. In Synechococcus sp. (strain WH7803), this protein is Octanoyltransferase.